Here is a 349-residue protein sequence, read N- to C-terminus: Protein RecA (349 aa).

65-72 contacts ATP; sequence GPESSGKT.

Belongs to the RecA family.

It localises to the cytoplasm. Functionally, can catalyze the hydrolysis of ATP in the presence of single-stranded DNA, the ATP-dependent uptake of single-stranded DNA by duplex DNA, and the ATP-dependent hybridization of homologous single-stranded DNAs. It interacts with LexA causing its activation and leading to its autocatalytic cleavage. The polypeptide is Protein RecA (Clostridium acetobutylicum (strain ATCC 824 / DSM 792 / JCM 1419 / IAM 19013 / LMG 5710 / NBRC 13948 / NRRL B-527 / VKM B-1787 / 2291 / W)).